A 491-amino-acid chain; its full sequence is Cytochrome P450 2B3 (491 aa).

C436 contributes to the heme binding site.

It belongs to the cytochrome P450 family. Requires heme as cofactor. As to expression, liver. Not found in the lung, kidney and prostate.

It is found in the endoplasmic reticulum membrane. The protein localises to the microsome membrane. The enzyme catalyses an organic molecule + reduced [NADPH--hemoprotein reductase] + O2 = an alcohol + oxidized [NADPH--hemoprotein reductase] + H2O + H(+). Functionally, cytochromes P450 are a group of heme-thiolate monooxygenases. In liver microsomes, this enzyme is involved in an NADPH-dependent electron transport pathway. It oxidizes a variety of structurally unrelated compounds, including steroids, fatty acids, and xenobiotics. The sequence is that of Cytochrome P450 2B3 (Cyp2b3) from Rattus norvegicus (Rat).